The following is a 180-amino-acid chain: ATP-dependent protease subunit HslV (180 aa).

T7 is a catalytic residue. Na(+)-binding residues include A165, C168, and T171.

This sequence belongs to the peptidase T1B family. HslV subfamily. In terms of assembly, a double ring-shaped homohexamer of HslV is capped on each side by a ring-shaped HslU homohexamer. The assembly of the HslU/HslV complex is dependent on binding of ATP.

The protein resides in the cytoplasm. The enzyme catalyses ATP-dependent cleavage of peptide bonds with broad specificity.. Allosterically activated by HslU binding. In terms of biological role, protease subunit of a proteasome-like degradation complex believed to be a general protein degrading machinery. This chain is ATP-dependent protease subunit HslV, found in Geobacillus kaustophilus (strain HTA426).